The primary structure comprises 270 residues: Type III pantothenate kinase (270 aa).

Asp-6 to Val-13 contributes to the ATP binding site. Gly-107–Arg-110 serves as a coordination point for substrate. Residue Asp-109 is the Proton acceptor of the active site. A K(+)-binding site is contributed by Asp-129. ATP is bound at residue Thr-132. Thr-184 is a substrate binding site.

Belongs to the type III pantothenate kinase family. Homodimer. NH4(+) serves as cofactor. The cofactor is K(+).

The protein localises to the cytoplasm. The enzyme catalyses (R)-pantothenate + ATP = (R)-4'-phosphopantothenate + ADP + H(+). The protein operates within cofactor biosynthesis; coenzyme A biosynthesis; CoA from (R)-pantothenate: step 1/5. Functionally, catalyzes the phosphorylation of pantothenate (Pan), the first step in CoA biosynthesis. The protein is Type III pantothenate kinase of Gluconobacter oxydans (strain 621H) (Gluconobacter suboxydans).